The sequence spans 238 residues: Lipoarabinomannan carrier protein LprG (238 aa).

The first 26 residues, 1–26 (MQAPKHHRRLFAVLATLNTATAVIAG), serve as a signal peptide directing secretion. Cysteine 27 carries the N-palmitoyl cysteine lipid modification. Cysteine 27 carries the S-diacylglycerol cysteine lipid modification.

It belongs to the LppX/LprAFG lipoprotein family. In terms of processing, modified by Lgt on Cys-27 with an S-linked diacylglyceral, signal peptide is removed by LspA, Cys-27 is further modifed with a fatty acid on its amino group by Lnt yielding a triacylated protein. Probably glycosylated, which is required for T-cell activation.

It is found in the cell inner membrane. The protein localises to the secreted. Its subcellular location is the cell wall. Its function is as follows. Helps membrane protein ML0556 (P55) transport triacylglycerides (TAG) across the inner cell membrane into the periplasm and probably ultimately to the outer membrane. Binds TAG in its hydrophobic cavity and transfers it between lipid bilayers. TAG probably regulates lipid metabolism and growth regulation and plays a structural role in the outer membrane. Binds di- and triacylated phosphatidyl-myo-inositol mannosides (PIMs), and glycolipid lipoglycan modulins lipoarabinomannan (LAM) and lipomannan (LM), facilitating their recognition by TLR2. Required for activity of drug efflux transporter ML0556. Required, probably with ML0556, for normal surface localization of LAM. Constitutes a host TLR2 agonist (toll-like receptor) able to stimulate proliferation of CD4+ T-cells derived from a human leprosy patient following protein processing/presentation by MHC class II molecules in peripheral blood mononuclear cells. The protein is Lipoarabinomannan carrier protein LprG of Mycobacterium leprae (strain TN).